A 226-amino-acid polypeptide reads, in one-letter code: 7-cyano-7-deazaguanine synthase (226 aa).

8 to 18 (ISGGLDSTTCL) is a binding site for ATP. Zn(2+) is bound by residues cysteine 188, cysteine 198, cysteine 201, and cysteine 204.

Belongs to the QueC family. Requires Zn(2+) as cofactor.

The enzyme catalyses 7-carboxy-7-deazaguanine + NH4(+) + ATP = 7-cyano-7-deazaguanine + ADP + phosphate + H2O + H(+). The protein operates within purine metabolism; 7-cyano-7-deazaguanine biosynthesis. In terms of biological role, catalyzes the ATP-dependent conversion of 7-carboxy-7-deazaguanine (CDG) to 7-cyano-7-deazaguanine (preQ(0)). This chain is 7-cyano-7-deazaguanine synthase, found in Coxiella burnetii (strain RSA 493 / Nine Mile phase I).